The sequence spans 139 residues: Large ribosomal subunit protein uL16c (139 aa).

Positions Met1–Met17 are enriched in basic residues. The interval Met1–Lys23 is disordered.

The protein belongs to the universal ribosomal protein uL16 family. Part of the 50S ribosomal subunit.

The protein localises to the plastid. The protein resides in the chloroplast. The protein is Large ribosomal subunit protein uL16c of Porphyra purpurea (Red seaweed).